Reading from the N-terminus, the 370-residue chain is 5-hydroxytryptamine receptor 5B (370 aa).

Positions Met1 to Pro36 are disordered. Residues Met1–Phe48 lie on the Extracellular side of the membrane. The N-linked (GlcNAc...) asparagine glycan is linked to Asn5. A compositionally biased stretch (low complexity) spans Glu20–Pro36. Residues Ser49–Val75 form a helical membrane-spanning segment. Over Thr76 to His88 the chain is Cytoplasmic. A helical membrane pass occupies residues Asn89 to Ser115. The Extracellular portion of the chain corresponds to Ala116–Cys127. A disulfide bond links Cys127 and Cys205. Residues His128 to Leu150 traverse the membrane as a helical segment. Serotonin is bound at residue Asp134. The Cytoplasmic segment spans residues Asp151–Arg168. Residues Arg169–Pro189 form a helical membrane-spanning segment. Residues Leu190–Pro211 lie on the Extracellular side of the membrane. Residues Ser212 to Tyr233 form a helical membrane-spanning segment. Topologically, residues Trp234–Val300 are cytoplasmic. Residues Gly301–Ala325 traverse the membrane as a helical segment. Over Cys326–Ser327 the chain is Extracellular. Residues Leu328 to Thr352 traverse the membrane as a helical segment. Residues Ala353–Arg370 are Cytoplasmic-facing.

It belongs to the G-protein coupled receptor 1 family. In terms of tissue distribution, brain; in the CA1 region of hippocampus, the medial habenula, and raphe nuclei.

The protein resides in the cell membrane. G-protein coupled receptor for 5-hydroxytryptamine (serotonin), a biogenic hormone that functions as a neurotransmitter, a hormone and a mitogen. Also functions as a receptor for ergot alkaloid derivatives and other psychoactive substances. Ligand binding causes a conformation change that triggers signaling via guanine nucleotide-binding proteins (G proteins) and modulates the activity of downstream effectors. Htr5b is coupled to G(i)/G(o) G alpha proteins and mediates inhibitory neurotransmission: signaling inhibits adenylate cyclase activity and activates a phosphatidylinositol-calcium second messenger system that regulates the release of Ca(2+) ions from intracellular stores. This Rattus norvegicus (Rat) protein is 5-hydroxytryptamine receptor 5B.